Consider the following 293-residue polypeptide: 4-diphosphocytidyl-2-C-methyl-D-erythritol kinase (293 aa).

K16 is a catalytic residue. 99-109 (PMGAGLGGGSS) serves as a coordination point for ATP. The active site involves D141.

It belongs to the GHMP kinase family. IspE subfamily.

The enzyme catalyses 4-CDP-2-C-methyl-D-erythritol + ATP = 4-CDP-2-C-methyl-D-erythritol 2-phosphate + ADP + H(+). Its pathway is isoprenoid biosynthesis; isopentenyl diphosphate biosynthesis via DXP pathway; isopentenyl diphosphate from 1-deoxy-D-xylulose 5-phosphate: step 3/6. Functionally, catalyzes the phosphorylation of the position 2 hydroxy group of 4-diphosphocytidyl-2C-methyl-D-erythritol. The polypeptide is 4-diphosphocytidyl-2-C-methyl-D-erythritol kinase (Paraburkholderia xenovorans (strain LB400)).